The sequence spans 704 residues: Fatty acid oxidation complex subunit alpha (704 aa).

Residues 1 to 190 are enoyl-CoA hydratase; the sequence is MSEQKAFSLK…KLGVVDACVP (190 aa). The interval 308 to 704 is 3-hydroxyacyl-CoA dehydrogenase; the sequence is TAVNKVGVLG…RAGEGRNFYD (397 aa).

The protein in the N-terminal section; belongs to the enoyl-CoA hydratase/isomerase family. It in the central section; belongs to the 3-hydroxyacyl-CoA dehydrogenase family. Heterotetramer of two alpha chains (FadJ) and two beta chains (FadI).

It localises to the cytoplasm. It carries out the reaction a (3S)-3-hydroxyacyl-CoA = a (2E)-enoyl-CoA + H2O. The enzyme catalyses a 4-saturated-(3S)-3-hydroxyacyl-CoA = a (3E)-enoyl-CoA + H2O. The catalysed reaction is a (3S)-3-hydroxyacyl-CoA + NAD(+) = a 3-oxoacyl-CoA + NADH + H(+). It catalyses the reaction (3S)-3-hydroxybutanoyl-CoA = (3R)-3-hydroxybutanoyl-CoA. It participates in lipid metabolism; fatty acid beta-oxidation. Functionally, catalyzes the formation of a hydroxyacyl-CoA by addition of water on enoyl-CoA. Also exhibits 3-hydroxyacyl-CoA epimerase and 3-hydroxyacyl-CoA dehydrogenase activities. In Vibrio campbellii (strain ATCC BAA-1116), this protein is Fatty acid oxidation complex subunit alpha.